The sequence spans 389 residues: Phospho-N-acetylmuramoyl-pentapeptide-transferase (389 aa).

The next 10 helical transmembrane spans lie at 25-45 (RAVM…PAVI), 73-93 (TMGG…WADL), 97-117 (FIWI…VDDY), 135-155 (FWQS…VSEA), 190-210 (ISYP…IVGA), 222-242 (GLVI…AYVM), 259-279 (AGEL…FLWF), 287-307 (FMGD…AVIV), 311-331 (IVLF…MLQV), and 366-386 (QVVV…LSTL).

It belongs to the glycosyltransferase 4 family. MraY subfamily. The cofactor is Mg(2+).

Its subcellular location is the cell inner membrane. It catalyses the reaction UDP-N-acetyl-alpha-D-muramoyl-L-alanyl-gamma-D-glutamyl-meso-2,6-diaminopimeloyl-D-alanyl-D-alanine + di-trans,octa-cis-undecaprenyl phosphate = di-trans,octa-cis-undecaprenyl diphospho-N-acetyl-alpha-D-muramoyl-L-alanyl-D-glutamyl-meso-2,6-diaminopimeloyl-D-alanyl-D-alanine + UMP. It functions in the pathway cell wall biogenesis; peptidoglycan biosynthesis. Catalyzes the initial step of the lipid cycle reactions in the biosynthesis of the cell wall peptidoglycan: transfers peptidoglycan precursor phospho-MurNAc-pentapeptide from UDP-MurNAc-pentapeptide onto the lipid carrier undecaprenyl phosphate, yielding undecaprenyl-pyrophosphoryl-MurNAc-pentapeptide, known as lipid I. This Paraburkholderia xenovorans (strain LB400) protein is Phospho-N-acetylmuramoyl-pentapeptide-transferase.